A 528-amino-acid chain; its full sequence is UDP-glucuronosyltransferase 2B30 (528 aa).

The N-terminal stretch at 1–23 (MSMKWTSALLLIQLSCYLSSGNC) is a signal peptide. K135 is subject to N6-succinyllysine. N315 is a glycosylation site (N-linked (GlcNAc...) asparagine). The chain crosses the membrane as a helical span at residues 493 to 513 (VIGFLLACVATVIFIITKCLF).

This sequence belongs to the UDP-glycosyltransferase family. In terms of tissue distribution, expressed in several tissues, including prostate, testis, mammary gland, kidney, adrenals and intestine.

The protein localises to the microsome membrane. It is found in the endoplasmic reticulum membrane. The catalysed reaction is glucuronate acceptor + UDP-alpha-D-glucuronate = acceptor beta-D-glucuronoside + UDP + H(+). Functionally, UDPGTs are of major importance in the conjugation and subsequent elimination of potentially toxic xenobiotics and endogenous compounds. This isozyme has glucuronidating capacity on testosterone, dihydrotestosterone, 5-alpha-androstane-3-alpha,17-beta-diol, androsterone, oestradiol, tetrahydroaldosterone and tetrahydrocortisone. This enzyme is essential to inactivation of several steroids. The polypeptide is UDP-glucuronosyltransferase 2B30 (UGT2B30) (Macaca fascicularis (Crab-eating macaque)).